The primary structure comprises 176 residues: Large ribosomal subunit protein uL6 (176 aa).

Belongs to the universal ribosomal protein uL6 family. Part of the 50S ribosomal subunit.

Functionally, this protein binds to the 23S rRNA, and is important in its secondary structure. It is located near the subunit interface in the base of the L7/L12 stalk, and near the tRNA binding site of the peptidyltransferase center. The protein is Large ribosomal subunit protein uL6 of Thiobacillus denitrificans (strain ATCC 25259 / T1).